Reading from the N-terminus, the 641-residue chain is Threonine--tRNA ligase (641 aa).

The 61-residue stretch at 1 to 61 folds into the TGS domain; sequence MPIITLPDGT…TQNSHIQIIT (61 aa). The interval 242 to 533 is catalytic; sequence DHRKLGKKYS…LIENYSGNFP (292 aa). Zn(2+) contacts are provided by C333, H384, and H510.

It belongs to the class-II aminoacyl-tRNA synthetase family. As to quaternary structure, homodimer. The cofactor is Zn(2+).

It localises to the cytoplasm. The catalysed reaction is tRNA(Thr) + L-threonine + ATP = L-threonyl-tRNA(Thr) + AMP + diphosphate + H(+). Catalyzes the attachment of threonine to tRNA(Thr) in a two-step reaction: L-threonine is first activated by ATP to form Thr-AMP and then transferred to the acceptor end of tRNA(Thr). Also edits incorrectly charged L-seryl-tRNA(Thr). This Prochlorococcus marinus (strain NATL2A) protein is Threonine--tRNA ligase.